Here is a 156-residue protein sequence, read N- to C-terminus: Ribosome maturation factor RimP (156 aa).

This sequence belongs to the RimP family.

The protein localises to the cytoplasm. Its function is as follows. Required for maturation of 30S ribosomal subunits. This is Ribosome maturation factor RimP from Bacillus subtilis (strain 168).